We begin with the raw amino-acid sequence, 564 residues long: Agglutinin (564 aa).

The first 24 residues, 1–24, serve as a signal peptide directing secretion; the sequence is MYAVATWLCFGSTSGWSFTLEDNN. 32 to 34 contributes to the beta-D-galactose binding site; sequence IIN. An N-linked (GlcNAc...) asparagine glycan is attached at N34. Residues Y104, Y147, E200, and R203 contribute to the active site. Residues 104-105 and 145-147 contribute to the AMP site; these read YV and GNY. Residue N259 is glycosylated (N-linked (GlcNAc...) asparagine). An intrachain disulfide couples C282 to C306. A propeptide spans 291 to 302 (linker peptide); the sequence is SLLIRPVVPNFN. Positions 309-436 constitute a Ricin B-type lectin 1 domain; it reads PEPIVRIVGR…YAVSQGWLPT (128 aa). Beta-D-galactose is bound by residues I312, 324–328, Q337, K342, and N348; that span reads DVTGE. One copy of the 1-alpha repeat lies at 319–361; that stretch reads NGLCVDVTGEEFFDGNPIQLWPCKSNTDWNQLWTLRKDSTIRS. C322 and C341 are disulfide-bonded. One copy of the 1-beta repeat lies at 362–402; that stretch reads NGKCLTISKSSPRQQVVIYNCSTATVGATRWQIWDNRTIIN. C365 and C382 are disulfide-bonded. N-linked (GlcNAc...) asparagine glycans are attached at residues N397 and N437. The stretch at 405–437 is one 1-gamma repeat; sequence SGLVLAATSGNSGTKLTVQTNIYAVSQGWLPTN. Residue N437 participates in beta-D-galactose binding. The Ricin B-type lectin 2 domain maps to 439-563; sequence TQPFVTTIVG…GNLNQIWLPL (125 aa). Residues 450 to 485 form a 2-alpha repeat; sequence YGMCLQANSGKVWLEDCTSEKAEQQWALYADGSIRP. Disulfide bonds link C453–C466 and C492–C509. The stretch at 489 to 528 is one 2-beta repeat; that stretch reads RDNCLTTDANIKGTVVKILSCGPASSGQRWMFKNDGTILN. The stretch at 531–558 is one 2-gamma repeat; the sequence is NGLVLDVRRSDPSLKQIIVHPFHGNLNQ.

It in the N-terminal section; belongs to the ribosome-inactivating protein family. Type 2 RIP subfamily.

The catalysed reaction is Endohydrolysis of the N-glycosidic bond at one specific adenosine on the 28S rRNA.. The chain is Agglutinin from Ricinus communis (Castor bean).